An 860-amino-acid chain; its full sequence is MTIVVFATEYDAANVIFSILCRSPSEHLIFPIIVKYKPSNNVSFCLQTQKCKNSKRIDTVFVCHAEKLNLSHYIQTASPIKAEDVANSLNDKETELLYVDMILSQTGKEKEDVEFKYMAYFHKSLIIKYLTGKFLLPTSPFWFLSTYGQTEGLLLLTMYYYLFEEQKSTITTTKNYVQCFTENTGSMVFTYSSMSEFINITLKSKFRKLFADFATYARQKNLRDKEEFKYLDTQINLFRKSSHLTNTFRVHYIYIAYNTALETTKFVNYCNITSYDSNLPIGQQCQRNVHILGNSLHENLLCIMKQYFNADCYFKTYIDIKRLKNPDLNVTEYEYALASKKKTIQALTSEQITRAIAKCNKNGEGLFSPVKPGLQGLLEISASDKYVQIQDKRIYRRQHLHKDYHRPFPVFRVQLLHKNIFCFGNSEDWYENMGFNRILQYLPDEYISDEALTRAIWLQDTHFLCDDFEKQFYTTRHEIFNERIPVTNYIGDLDLPLQDTATITEETFFSMCRLIRLTLINAWKKIFPSIDTHTHPIFFFKTQCDTTNDALDYTEDPTEIKQFCICRKKIGLRISIPLPNGTAIAGGEPLKQLSKILNHVMCLDQELSQILNSLTFPGECFDIGIYHTGHCIRIGYMYKTDMDKGKMLHGRLTPIFIVPEGYRNSCKTFIQMQMDLNNLLHHGTKKAPIEELIYSITDKGCPKENLSFMDLKSRQLWNKVNIATDTLITKYLNTHGFNNNATSADDSLLSFIRLIGWPIIKTQLITHYETRIAQQFSQVTFLKIDSKNLQIKKTQFGRVSDFSCLNRQHRGNRDNVLVYIQLKADGNRLILILWSTCFATKCQSNSKQVHCSIALEQLKN.

The CHC2-type zinc-finger motif lies at 804 to 842 (CLNRQHRGNRDNVLVYIQLKADGNRLILILWSTCFATKC).

It belongs to the herpesviridae DNA primase family. In terms of assembly, associates with the helicase and the primase-associated factor to form the helicase-primase factor.

It is found in the host nucleus. Functionally, essential component of the helicase/primase complex. Unwinds the DNA at the replication forks and generates single-stranded DNA for both leading and lagging strand synthesis. The primase initiates primer synthesis and thereby produces large amount of short RNA primers on the lagging strand that the polymerase elongates using dNTPs. In Homo sapiens (Human), this protein is DNA primase (U43).